The sequence spans 262 residues: Ribosomal RNA small subunit methyltransferase A (262 aa).

Residues asparagine 14, leucine 16, glycine 41, glutamate 62, aspartate 87, and asparagine 109 each coordinate S-adenosyl-L-methionine.

Belongs to the class I-like SAM-binding methyltransferase superfamily. rRNA adenine N(6)-methyltransferase family. RsmA subfamily.

It localises to the cytoplasm. It catalyses the reaction adenosine(1518)/adenosine(1519) in 16S rRNA + 4 S-adenosyl-L-methionine = N(6)-dimethyladenosine(1518)/N(6)-dimethyladenosine(1519) in 16S rRNA + 4 S-adenosyl-L-homocysteine + 4 H(+). Specifically dimethylates two adjacent adenosines (A1518 and A1519) in the loop of a conserved hairpin near the 3'-end of 16S rRNA in the 30S particle. May play a critical role in biogenesis of 30S subunits. In Francisella tularensis subsp. tularensis (strain FSC 198), this protein is Ribosomal RNA small subunit methyltransferase A.